The sequence spans 140 residues: Fluoride-specific ion channel FluC 1 (140 aa).

Helical transmembrane passes span 3-23 (TGAT…GAAA), 38-58 (APLW…GLVL), 80-100 (ILYP…STVM), and 113-133 (IAGV…ALWC). Glycine 91 and threonine 94 together coordinate Na(+).

This sequence belongs to the fluoride channel Fluc/FEX (TC 1.A.43) family.

It is found in the cell membrane. It carries out the reaction fluoride(in) = fluoride(out). Its activity is regulated as follows. Na(+) is not transported, but it plays an essential structural role and its presence is essential for fluoride channel function. Its function is as follows. Fluoride-specific ion channel. Important for reducing fluoride concentration in the cell, thus reducing its toxicity. The sequence is that of Fluoride-specific ion channel FluC 1 from Corynebacterium jeikeium (strain K411).